The following is a 114-amino-acid chain: EVQLVESGGDLVKPGGSLRLSCVASGITFSGYDMQWVRQAPGKGLQKVAYFNDALSAQGYADAVKGRFTISKDNAKDSLYLQMNSLRAEDTAVYYCAPWQFEYWGQGTLVTVSS.

The Ig-like domain maps to 1 to 112 (EVQLVESGGD…YWGQGTLVTV (112 aa)).

This is Ig heavy chain V region GOM from Canis lupus familiaris (Dog).